Reading from the N-terminus, the 520-residue chain is F-box/LRR-repeat protein At3g59200 (520 aa).

An F-box domain is found at 6 to 54; the sequence is RDRISSLPNPVVSHILSFLPTKEAASTSVLSKKWRYLFAYVTNLDFDDS. LRR repeat units lie at residues 170–197, 219–244, and 340–365; these read CVDVQERGFGFVKLLSGCPVLEELVLMN, FCEETYENPKSVSFDTPNLVYLEYSD, and NSEIRWDSLPGLLKNCPNLETLVLKR.

In Arabidopsis thaliana (Mouse-ear cress), this protein is F-box/LRR-repeat protein At3g59200.